A 283-amino-acid chain; its full sequence is Bifunctional protein FolD (283 aa).

166–168 (GAS) is an NADP(+) binding site.

Belongs to the tetrahydrofolate dehydrogenase/cyclohydrolase family. Homodimer.

It carries out the reaction (6R)-5,10-methylene-5,6,7,8-tetrahydrofolate + NADP(+) = (6R)-5,10-methenyltetrahydrofolate + NADPH. The enzyme catalyses (6R)-5,10-methenyltetrahydrofolate + H2O = (6R)-10-formyltetrahydrofolate + H(+). It participates in one-carbon metabolism; tetrahydrofolate interconversion. Its function is as follows. Catalyzes the oxidation of 5,10-methylenetetrahydrofolate to 5,10-methenyltetrahydrofolate and then the hydrolysis of 5,10-methenyltetrahydrofolate to 10-formyltetrahydrofolate. The sequence is that of Bifunctional protein FolD from Coxiella burnetii (strain Dugway 5J108-111).